A 135-amino-acid chain; its full sequence is Small ribosomal subunit protein uS12 (135 aa).

Aspartate 89 carries the post-translational modification 3-methylthioaspartic acid. A disordered region spans residues 101 to 135; sequence SLDTSGVADRKQSRSKYGAKQPKAGAAAPAKGKGR. Residues 118-135 are compositionally biased toward low complexity; sequence GAKQPKAGAAAPAKGKGR.

Belongs to the universal ribosomal protein uS12 family. As to quaternary structure, part of the 30S ribosomal subunit. Contacts proteins S8 and S17. May interact with IF1 in the 30S initiation complex.

With S4 and S5 plays an important role in translational accuracy. Functionally, interacts with and stabilizes bases of the 16S rRNA that are involved in tRNA selection in the A site and with the mRNA backbone. Located at the interface of the 30S and 50S subunits, it traverses the body of the 30S subunit contacting proteins on the other side and probably holding the rRNA structure together. The combined cluster of proteins S8, S12 and S17 appears to hold together the shoulder and platform of the 30S subunit. In Chlorobium limicola (strain DSM 245 / NBRC 103803 / 6330), this protein is Small ribosomal subunit protein uS12.